The sequence spans 75 residues: Putative membrane protein insertion efficiency factor (75 aa).

This sequence belongs to the UPF0161 family.

Its subcellular location is the cell membrane. Functionally, could be involved in insertion of integral membrane proteins into the membrane. The sequence is that of Putative membrane protein insertion efficiency factor from Bacillus velezensis (strain DSM 23117 / BGSC 10A6 / LMG 26770 / FZB42) (Bacillus amyloliquefaciens subsp. plantarum).